A 235-amino-acid polypeptide reads, in one-letter code: tRNA (guanine-N(1)-)-methyltransferase (235 aa).

S-adenosyl-L-methionine contacts are provided by residues G114 and 134 to 139; that span reads IGDYIL.

Belongs to the RNA methyltransferase TrmD family. As to quaternary structure, homodimer.

Its subcellular location is the cytoplasm. The enzyme catalyses guanosine(37) in tRNA + S-adenosyl-L-methionine = N(1)-methylguanosine(37) in tRNA + S-adenosyl-L-homocysteine + H(+). Its function is as follows. Specifically methylates guanosine-37 in various tRNAs. The polypeptide is tRNA (guanine-N(1)-)-methyltransferase (Ehrlichia canis (strain Jake)).